Here is a 141-residue protein sequence, read N- to C-terminus: Large ribosomal subunit protein uL11 (141 aa).

The protein belongs to the universal ribosomal protein uL11 family. As to quaternary structure, part of the ribosomal stalk of the 50S ribosomal subunit. Interacts with L10 and the large rRNA to form the base of the stalk. L10 forms an elongated spine to which L12 dimers bind in a sequential fashion forming a multimeric L10(L12)X complex. Post-translationally, one or more lysine residues are methylated.

Forms part of the ribosomal stalk which helps the ribosome interact with GTP-bound translation factors. This is Large ribosomal subunit protein uL11 from Thermomicrobium roseum (strain ATCC 27502 / DSM 5159 / P-2).